Here is a 116-residue protein sequence, read N- to C-terminus: Large ribosomal subunit protein bL19 (116 aa).

Belongs to the bacterial ribosomal protein bL19 family.

Its function is as follows. This protein is located at the 30S-50S ribosomal subunit interface and may play a role in the structure and function of the aminoacyl-tRNA binding site. The protein is Large ribosomal subunit protein bL19 of Streptomyces avermitilis (strain ATCC 31267 / DSM 46492 / JCM 5070 / NBRC 14893 / NCIMB 12804 / NRRL 8165 / MA-4680).